We begin with the raw amino-acid sequence, 189 residues long: UPF0149 protein VF_2102 (189 aa).

It belongs to the UPF0149 family.

This is UPF0149 protein VF_2102 from Aliivibrio fischeri (strain ATCC 700601 / ES114) (Vibrio fischeri).